Here is a 60-residue protein sequence, read N- to C-terminus: MAVQKSRKSRSRRDMRRSHHHMEVAELSIDATTGEKHRRHHMTKDGFYRGRQLFKASQED.

Basic residues predominate over residues 1–20 (MAVQKSRKSRSRRDMRRSHH). Residues 1–60 (MAVQKSRKSRSRRDMRRSHHHMEVAELSIDATTGEKHRRHHMTKDGFYRGRQLFKASQED) form a disordered region.

This sequence belongs to the bacterial ribosomal protein bL32 family.

The chain is Large ribosomal subunit protein bL32 from Psychrobacter sp. (strain PRwf-1).